A 279-amino-acid polypeptide reads, in one-letter code: uncharacterized protein (279 aa).

The segment at 60–92 (RKANKLNNKQDSTFFNSASGETNNTILPPGVKN) is disordered. Residues 70–85 (DSTFFNSASGETNNTI) are compositionally biased toward polar residues. The next 3 helical transmembrane spans lie at 156–176 (IVGY…AVMN), 202–222 (ISIF…ILFL), and 237–257 (FIWI…LLMI).

The protein resides in the cell membrane. This is an uncharacterized protein from Mycoplasma genitalium (strain ATCC 33530 / DSM 19775 / NCTC 10195 / G37) (Mycoplasmoides genitalium).